Reading from the N-terminus, the 593-residue chain is Translation initiation factor rli1 (593 aa).

4Fe-4S ferredoxin-type domains lie at 7-39 (RIAI…KLCI) and 46-75 (RIAF…IINL). ABC transporter domains follow at residues 70–318 (INII…FLDG) and 334–556 (FRLA…LKNL). Residues 110-117 (GTNGIGKS) and 382-389 (GENGTGKT) contribute to the ATP site.

It belongs to the ABC transporter superfamily. As to quaternary structure, component of the multifactor complex (MFC). The complex associates with pre-initiation complexes.

The protein resides in the cytoplasm. It localises to the nucleus. Functionally, component of the multifactor complex (MFC) involved in translation initiation. Required for the binding of MFC to the 40S ribosome. Required for the processing and nuclear export of the 60S and 40S ribosomal subunits. This Schizosaccharomyces pombe (strain 972 / ATCC 24843) (Fission yeast) protein is Translation initiation factor rli1 (rli1).